A 975-amino-acid chain; its full sequence is MRWGHHLPRASWGSGFRRALQRPDDRIPFLIHWSWPLQGERPFGPPRAFIRHHGSSVDSAPPPGRHGRLFPSASATEAIQRHRRNLAEWFSRLPREERQFGPTFALDTVHVDPVIRESTPDELLRPPAELALEHQPPQAGLPPLALSQLFNPDACGRRVQTVVLYGTVGTGKSTLVRKMVLDWCYGRLPAFELLIPFSCEDLSSLGPAPASLCQLVAQRYTPLKEVLPLMAAAGSHLLFVLHGLEHLNLDFRLAGTGLCSDPEEPQEPAAIIVNLLRKYMLPQASILVTTRPSAIGRIPSKYVGRYGEICGFSDTNLQKLYFQLRLNQPYCGYAVGGSGVSATPAQRDHLVQMLSRNLEGHHQIAAACFLPSYCWLVCATLHFLHAPTPAGQTLTSIYTSFLRLNFSGETLDSTDPSNLSLMAYAARTMGKLAYEGVSSRKTYFSEEDVCGCLEAGIRTEEEFQLLHIFRRDALRFFLAPCVEPGRAGTFVFTVPAMQEYLAALYIVLGLRKTTLQKVGKEVAELVGRVGEDVSLVLGIMAKLLPLRALPLLFNLIKVVPRVFGRMVGKSREAVAQAMVLEMFREEDYYNDDVLDQMGASILGVEGPRRHPDEPPEDEVFELFPMFMGGLLSAHNRAVLAQLGCPIKNLDALENAQAIKKKLGKLGRQVLPPSELLDHLFFHYEFQNQRFSAEVLSSLRQLNLAGVRMTPVKCTVVAAVLGSGRHALDEVNLASCQLDPAGLRTLLPVFLRARKLGLQLNSLGPEACKDLRDLLLHDQCQITTLRLSNNPLTAAGVAVLMEGLAGNTSVTHLSLLHTGLGDEGLELLAAQLDRNRQLQELNVAYNGAGDTAALALARAAREHPSLELLHLYFNELSSEGRQVLRDLGGAAEGGARVVVSLTEGTAVSEYWSVILSEVQRNLNSWDRARVQRHLELLLRDLEDSRGATLNPWRKAQLLRVEGEVRALLEQLGSSGS.

The transit peptide at 1 to 86 (MRWGHHLPRA…EAIQRHRRNL (86 aa)) directs the protein to the mitochondrion. The tract at residues 75 to 556 (ATEAIQRHRR…RALPLLFNLI (482 aa)) is required for interaction with MAVS. The NACHT domain occupies 160–483 (QTVVLYGTVG…LRFFLAPCVE (324 aa)). 166–173 (GTVGTGKS) is a binding site for ATP. The required for the repression of MAVS-induced interferon signaling stretch occupies residues 556-974 (IKVVPRVFGR…ALLEQLGSSG (419 aa)). An LRRNT domain is found at 667–694 (RQVLPPSELLDHLFFHYEFQNQRFSAEV). LRR repeat units follow at residues 695-718 (LSSL…VVAA), 724-747 (RHAL…TLLP), 749-777 (FLRA…LLHD), 778-801 (QCQI…VLME), 811-834 (HLSL…LDRN), 835-857 (RQLQ…ALAR), 858-877 (AARE…ELSS), and 878-899 (EGRQ…VVVS). Residues 906–970 (VSEYWSVILS…GEVRALLEQL (65 aa)) form the LRRCT domain.

The protein belongs to the NLRP family. Homohexamer. Interacts with MAVS. Interacts with TUFM. In terms of assembly, (Microbial infection) Interacts with influenza A virus protein PB1-F2. As to expression, ubiquitously expressed. Strongest expression in mammary gland, heart and muscle. Detected in HeLa, HEK293T, THP-1, HL-60, Raji and Jurkat cell lines (at protein level).

It is found in the mitochondrion outer membrane. Participates in antiviral signaling. Acts as a negative regulator of MAVS-mediated antiviral responses, through the inhibition of the virus-induced RLH (RIG-like helicase)-MAVS interaction. Instead, promotes autophagy by interacting with TUFM and subsequently recruiting the autophagy-related proteins ATG5 and ATG12. Also regulates MAVS-dependent NLRP3 inflammasome activation to attenuate apoptosis. Has no inhibitory function on NF-kappa-B signaling pathway, but enhances NF-kappa-B and JUN N-terminal kinase dependent signaling through the production of reactive oxygen species. Regulates viral mediated-inflammation and energy metabolism in a sex-dependent manner. In females, prevents uncontrolled inflammation and energy metabolism and thus, may contribute to the sex differences observed in infectious and inflammatory diseases. This chain is NLR family member X1 (NLRX1), found in Homo sapiens (Human).